Consider the following 130-residue polypeptide: Mediator of RNA polymerase II transcription subunit 31 (130 aa).

The protein belongs to the Mediator complex subunit 31 family. Component of the Mediator complex.

Its subcellular location is the nucleus. In terms of biological role, component of the Mediator complex, a coactivator involved in the regulated transcription of nearly all RNA polymerase II-dependent genes. Mediator functions as a bridge to convey information from gene-specific regulatory proteins to the basal RNA polymerase II transcription machinery. Mediator is recruited to promoters by direct interactions with regulatory proteins and serves as a scaffold for the assembly of a functional preinitiation complex with RNA polymerase II and the general transcription factors. The chain is Mediator of RNA polymerase II transcription subunit 31 (SOH1) from Candida glabrata (strain ATCC 2001 / BCRC 20586 / JCM 3761 / NBRC 0622 / NRRL Y-65 / CBS 138) (Yeast).